The primary structure comprises 211 residues: Uridine kinase (211 aa).

12–19 (GGSGSGKT) provides a ligand contact to ATP.

It belongs to the uridine kinase family.

It localises to the cytoplasm. The catalysed reaction is uridine + ATP = UMP + ADP + H(+). The enzyme catalyses cytidine + ATP = CMP + ADP + H(+). The protein operates within pyrimidine metabolism; CTP biosynthesis via salvage pathway; CTP from cytidine: step 1/3. Its pathway is pyrimidine metabolism; UMP biosynthesis via salvage pathway; UMP from uridine: step 1/1. This Bacillus subtilis (strain 168) protein is Uridine kinase (udk).